A 172-amino-acid polypeptide reads, in one-letter code: Cell division protein SepF (172 aa).

Residues 16 to 78 form a disordered region; the sequence is DGDEHYEPQP…RAASNRDDSS (63 aa). The span at 17-48 shows a compositional bias: basic and acidic residues; it reads GDEHYEPQPEGKQTRPAQKNEEYVDQEIRHTE.

This sequence belongs to the SepF family. As to quaternary structure, homodimer. Interacts with FtsZ.

Its subcellular location is the cytoplasm. Its function is as follows. Cell division protein that is part of the divisome complex and is recruited early to the Z-ring. Probably stimulates Z-ring formation, perhaps through the cross-linking of FtsZ protofilaments. Its function overlaps with FtsA. The protein is Cell division protein SepF of Renibacterium salmoninarum (strain ATCC 33209 / DSM 20767 / JCM 11484 / NBRC 15589 / NCIMB 2235).